The chain runs to 310 residues: Ribosomal protein uL3 glutamine methyltransferase (310 aa).

It belongs to the protein N5-glutamine methyltransferase family. PrmB subfamily.

The enzyme catalyses L-glutaminyl-[ribosomal protein uL3] + S-adenosyl-L-methionine = N(5)-methyl-L-glutaminyl-[ribosomal protein uL3] + S-adenosyl-L-homocysteine + H(+). In terms of biological role, methylates large ribosomal subunit protein uL3 on a specific glutamine residue. This Aliivibrio fischeri (strain ATCC 700601 / ES114) (Vibrio fischeri) protein is Ribosomal protein uL3 glutamine methyltransferase.